A 423-amino-acid chain; its full sequence is Endochitinase 42 (423 aa).

The signal sequence occupies residues 1–22; the sequence is MLSFLGKSVALLAALQATLSSP. The propeptide occupies 23–34; it reads KPGHRRASVEKR. One can recognise a GH18 domain in the interval 38–401; sequence YANSVYFTNW…GTSHRALGGL (364 aa). Residues 102–103 and 129–132 each bind chitin; these read GT and GGWT. Catalysis depends on Glu171, which acts as the Proton donor. Residue Tyr172 coordinates chitin. Asn218 carries N-linked (GlcNAc...) asparagine glycosylation. Residues 237–240 and Trp378 contribute to the chitin site; that span reads MAYD.

The protein belongs to the glycosyl hydrolase 18 family. Chitinase class V subfamily.

The protein localises to the secreted. It carries out the reaction Random endo-hydrolysis of N-acetyl-beta-D-glucosaminide (1-&gt;4)-beta-linkages in chitin and chitodextrins.. Functionally, secreted chitinase involved in the degradation of chitin, a component of the cell walls of fungi and exoskeletal elements of some animals (including worms and arthropods). Plays a morphogenetic role during apical growth, cell division and differentiation (cell wall morphogenesis). Also acts as an antifungal agent. Involved in the degradation and further assimilation of phytopathogenic fungi, namely mycoparasitism, the major mechanism accounting for the antagonistic activity against phytopathogenic fungi displayed by Trichoderma. In Trichoderma harzianum (Hypocrea lixii), this protein is Endochitinase 42 (chit42).